The following is a 232-amino-acid chain: DNA repair protein RecO (232 aa).

Belongs to the RecO family.

Involved in DNA repair and RecF pathway recombination. The chain is DNA repair protein RecO from Francisella tularensis subsp. novicida (strain U112).